Here is a 212-residue protein sequence, read N- to C-terminus: B3 domain-containing protein Os04g0386900 (212 aa).

A disordered region spans residues 1 to 78 (MRAATALPSI…PRPPEPEPEK (78 aa)). 2 stretches are compositionally biased toward low complexity: residues 8–23 (PSIPSSSSPSPMASDP) and 36–46 (DAGAEDPAAVD). The segment at residues 93-191 (FTCIMCKSHV…EFRVQVLRAE (99 aa)) is a DNA-binding region (TF-B3).

The protein localises to the nucleus. The polypeptide is B3 domain-containing protein Os04g0386900 (Oryza sativa subsp. japonica (Rice)).